A 477-amino-acid chain; its full sequence is Ribulose bisphosphate carboxylase large chain (477 aa).

A propeptide spanning residues 1–2 (MS) is cleaved from the precursor. N-acetylproline is present on P3. K14 bears the N6,N6,N6-trimethyllysine mark. Residues N123 and T173 each contribute to the substrate site. Catalysis depends on K175, which acts as the Proton acceptor. Residue K177 participates in substrate binding. Residues K201, D203, and E204 each contribute to the Mg(2+) site. Position 201 is an N6-carboxylysine (K201). Catalysis depends on H294, which acts as the Proton acceptor. Substrate is bound by residues R295, H327, and S379.

This sequence belongs to the RuBisCO large chain family. Type I subfamily. Heterohexadecamer of 8 large chains and 8 small chains; disulfide-linked. The disulfide link is formed within the large subunit homodimers. Mg(2+) is required as a cofactor. The disulfide bond which can form in the large chain dimeric partners within the hexadecamer appears to be associated with oxidative stress and protein turnover.

Its subcellular location is the plastid. It is found in the chloroplast. It catalyses the reaction 2 (2R)-3-phosphoglycerate + 2 H(+) = D-ribulose 1,5-bisphosphate + CO2 + H2O. It carries out the reaction D-ribulose 1,5-bisphosphate + O2 = 2-phosphoglycolate + (2R)-3-phosphoglycerate + 2 H(+). Functionally, ruBisCO catalyzes two reactions: the carboxylation of D-ribulose 1,5-bisphosphate, the primary event in carbon dioxide fixation, as well as the oxidative fragmentation of the pentose substrate in the photorespiration process. Both reactions occur simultaneously and in competition at the same active site. This chain is Ribulose bisphosphate carboxylase large chain, found in Manihot esculenta (Cassava).